The following is a 549-amino-acid chain: Undecaprenyl phosphate-alpha-4-amino-4-deoxy-L-arabinose arabinosyl transferase 2 (549 aa).

The next 12 helical transmembrane spans lie at 9 to 29 (LLLGIFLLAYLLPLGSHGLWI), 80 to 102 (LFGVRFASALSTGLSVLLCFLIA), 112 to 132 (SFVCALLYMSFVIVAGQAGYA), 133 to 153 (NLDPQFTFWVNLSLVALWFAL), 176 to 196 (FMTKGFLAWLLPVLIALPWML), 204 to 224 (LLLYGPVAIAVAIIVSLPWAL), 259 to 279 (FYLPLLVAFSLPWVGMLPVAF), 290 to 310 (GIAFLGLWLLMPLLFFSLSNG), 312 to 332 (LPTYILPCLLPLALLLGHALA), 342 to 362 (ALGLNGLLNLLLGLVTLIGLV), 377 to 397 (SLVLVFIALTGWIISNLLQAF), and 402 to 422 (CWAAPAVGSLLLIALLPAALP).

The protein belongs to the glycosyltransferase 83 family.

The protein localises to the cell inner membrane. The enzyme catalyses 4-amino-4-deoxy-alpha-L-arabinopyranosyl di-trans,octa-cis-undecaprenyl phosphate + lipid IVA = lipid IIA + di-trans,octa-cis-undecaprenyl phosphate.. The protein operates within lipopolysaccharide metabolism; 4-amino-4-deoxy-beta-L-arabinose-lipid A biosynthesis. In terms of biological role, catalyzes the transfer of the L-Ara4N moiety of the glycolipid undecaprenyl phosphate-alpha-L-Ara4N to lipid A. The modified arabinose is attached to lipid A and is required for resistance to polymyxin and cationic antimicrobial peptides. This is Undecaprenyl phosphate-alpha-4-amino-4-deoxy-L-arabinose arabinosyl transferase 2 from Pseudomonas fluorescens (strain Pf0-1).